The following is a 205-amino-acid chain: Large ribosomal subunit protein uL3 (205 aa).

It belongs to the universal ribosomal protein uL3 family. Part of the 50S ribosomal subunit. Forms a cluster with proteins L14 and L19.

One of the primary rRNA binding proteins, it binds directly near the 3'-end of the 23S rRNA, where it nucleates assembly of the 50S subunit. The protein is Large ribosomal subunit protein uL3 of Parabacteroides distasonis (strain ATCC 8503 / DSM 20701 / CIP 104284 / JCM 5825 / NCTC 11152).